The primary structure comprises 55 residues: UPF0391 membrane protein Tbd_2772 (55 aa).

2 helical membrane passes run 1 to 21 (MFGW…FGFA) and 28 to 48 (AWIA…MLVM).

The protein belongs to the UPF0391 family.

The protein localises to the cell membrane. The protein is UPF0391 membrane protein Tbd_2772 of Thiobacillus denitrificans (strain ATCC 25259 / T1).